We begin with the raw amino-acid sequence, 201 residues long: dTTP/UTP pyrophosphatase (201 aa).

Aspartate 76 (proton acceptor) is an active-site residue.

The protein belongs to the Maf family. YhdE subfamily. A divalent metal cation is required as a cofactor.

Its subcellular location is the cytoplasm. It carries out the reaction dTTP + H2O = dTMP + diphosphate + H(+). The catalysed reaction is UTP + H2O = UMP + diphosphate + H(+). Nucleoside triphosphate pyrophosphatase that hydrolyzes dTTP and UTP. May have a dual role in cell division arrest and in preventing the incorporation of modified nucleotides into cellular nucleic acids. This Neisseria meningitidis serogroup A / serotype 4A (strain DSM 15465 / Z2491) protein is dTTP/UTP pyrophosphatase.